Consider the following 178-residue polypeptide: ATP-dependent protease subunit HslV (178 aa).

Threonine 7 is a catalytic residue. Na(+)-binding residues include glycine 162, cysteine 165, and threonine 168.

Belongs to the peptidase T1B family. HslV subfamily. As to quaternary structure, a double ring-shaped homohexamer of HslV is capped on each side by a ring-shaped HslU homohexamer. The assembly of the HslU/HslV complex is dependent on binding of ATP.

It localises to the cytoplasm. It catalyses the reaction ATP-dependent cleavage of peptide bonds with broad specificity.. Its activity is regulated as follows. Allosterically activated by HslU binding. Its function is as follows. Protease subunit of a proteasome-like degradation complex believed to be a general protein degrading machinery. This chain is ATP-dependent protease subunit HslV, found in Leptothrix cholodnii (strain ATCC 51168 / LMG 8142 / SP-6) (Leptothrix discophora (strain SP-6)).